The chain runs to 340 residues: L-threonine 3-dehydrogenase (340 aa).

Residue C38 participates in Zn(2+) binding. Active-site charge relay system residues include T40 and H43. 6 residues coordinate Zn(2+): H63, E64, C93, C96, C99, and C107. Residues I175, D195, R200, 262 to 264, and 286 to 287 contribute to the NAD(+) site; these read LGI and IY.

Belongs to the zinc-containing alcohol dehydrogenase family. As to quaternary structure, homotetramer. Requires Zn(2+) as cofactor.

The protein resides in the cytoplasm. The enzyme catalyses L-threonine + NAD(+) = (2S)-2-amino-3-oxobutanoate + NADH + H(+). Its pathway is amino-acid degradation; L-threonine degradation via oxydo-reductase pathway; glycine from L-threonine: step 1/2. Functionally, catalyzes the NAD(+)-dependent oxidation of L-threonine to 2-amino-3-ketobutyrate. The polypeptide is L-threonine 3-dehydrogenase (Pseudoalteromonas atlantica (strain T6c / ATCC BAA-1087)).